Reading from the N-terminus, the 322-residue chain is Deoxyhypusine hydroxylase (322 aa).

2 HEAT-like PBS-type repeats span residues 76-102 (LKHE…VLAD) and 109-135 (VRHE…YFKE). His-78, Glu-79, His-111, Glu-112, His-236, Glu-237, His-269, and Glu-270 together coordinate Fe cation. One copy of the HEAT-like PBS-type 3 repeat lies at 267-293 (VRHEAAEALGSIATDDVLPVLKEHLKD).

This sequence belongs to the deoxyhypusine hydroxylase family. Fe(2+) serves as cofactor.

It is found in the cytoplasm. Its subcellular location is the nucleus. The enzyme catalyses [eIF5A protein]-deoxyhypusine + AH2 + O2 = [eIF5A protein]-hypusine + A + H2O. Its pathway is protein modification; eIF5A hypusination. Its function is as follows. Catalyzes the hydroxylation of the N(6)-(4-aminobutyl)-L-lysine intermediate to form hypusine, an essential post-translational modification only found in mature eIF-5A factor. This Kluyveromyces lactis (strain ATCC 8585 / CBS 2359 / DSM 70799 / NBRC 1267 / NRRL Y-1140 / WM37) (Yeast) protein is Deoxyhypusine hydroxylase.